The sequence spans 276 residues: tRNA dimethylallyltransferase (276 aa).

The interaction with substrate tRNA stretch occupies residues Asp9–Ser12.

The protein belongs to the IPP transferase family. As to quaternary structure, monomer. It depends on Mg(2+) as a cofactor.

The enzyme catalyses adenosine(37) in tRNA + dimethylallyl diphosphate = N(6)-dimethylallyladenosine(37) in tRNA + diphosphate. Functionally, catalyzes the transfer of a dimethylallyl group onto the adenine at position 37 in tRNAs that read codons beginning with uridine, leading to the formation of N6-(dimethylallyl)adenosine (i(6)A). This is tRNA dimethylallyltransferase (miaA) from Helicobacter pylori (strain Shi470).